The sequence spans 414 residues: Phosphoglycerate kinase (414 aa).

Substrate contacts are provided by residues 19-21 (DLN), R34, 57-60 (HQSK), R114, and R154. ATP is bound by residues E332 and 358-361 (GGHS).

Belongs to the phosphoglycerate kinase family. As to quaternary structure, monomer.

Its subcellular location is the cytoplasm. The enzyme catalyses (2R)-3-phosphoglycerate + ATP = (2R)-3-phospho-glyceroyl phosphate + ADP. It functions in the pathway carbohydrate degradation; glycolysis; pyruvate from D-glyceraldehyde 3-phosphate: step 2/5. The sequence is that of Phosphoglycerate kinase from Thermococcus onnurineus (strain NA1).